We begin with the raw amino-acid sequence, 92 residues long: Small ribosomal subunit protein bS20 (92 aa).

Positions 1–11 (MANIKSQKKRI) are enriched in basic residues. Residues 1-22 (MANIKSQKKRIRQNEKARLRNK) form a disordered region.

Belongs to the bacterial ribosomal protein bS20 family.

Binds directly to 16S ribosomal RNA. This is Small ribosomal subunit protein bS20 from Thermobifida fusca (strain YX).